A 140-amino-acid chain; its full sequence is Nucleoside diphosphate kinase (140 aa).

ATP is bound by residues K11, F59, R87, T93, R104, and N114. H117 (pros-phosphohistidine intermediate) is an active-site residue.

It belongs to the NDK family. In terms of assembly, homotetramer. The cofactor is Mg(2+).

Its subcellular location is the cytoplasm. The catalysed reaction is a 2'-deoxyribonucleoside 5'-diphosphate + ATP = a 2'-deoxyribonucleoside 5'-triphosphate + ADP. The enzyme catalyses a ribonucleoside 5'-diphosphate + ATP = a ribonucleoside 5'-triphosphate + ADP. Functionally, major role in the synthesis of nucleoside triphosphates other than ATP. The ATP gamma phosphate is transferred to the NDP beta phosphate via a ping-pong mechanism, using a phosphorylated active-site intermediate. In Rickettsia peacockii (strain Rustic), this protein is Nucleoside diphosphate kinase.